We begin with the raw amino-acid sequence, 900 residues long: DNA mismatch repair protein MutS (900 aa).

Residues 1–88 (MPGPSDDPTE…PAWAHHSQVD (88 aa)) form a disordered region. Residues 56 to 68 (APADHNAADHDSN) show a composition bias toward basic and acidic residues. ATP is bound at residue 714 to 721 (GPNASGKS).

This sequence belongs to the DNA mismatch repair MutS family.

Its function is as follows. This protein is involved in the repair of mismatches in DNA. It is possible that it carries out the mismatch recognition step. This protein has a weak ATPase activity. The chain is DNA mismatch repair protein MutS from Parasynechococcus marenigrum (strain WH8102).